Reading from the N-terminus, the 275-residue chain is Elongation factor Ts (275 aa).

An involved in Mg(2+) ion dislocation from EF-Tu region spans residues 76-79 (TDFV).

This sequence belongs to the EF-Ts family.

Its subcellular location is the cytoplasm. Associates with the EF-Tu.GDP complex and induces the exchange of GDP to GTP. It remains bound to the aminoacyl-tRNA.EF-Tu.GTP complex up to the GTP hydrolysis stage on the ribosome. The protein is Elongation factor Ts of Corynebacterium glutamicum (strain R).